The sequence spans 527 residues: Cytochrome P450 monooxyhenase eriA (527 aa).

Residues 17 to 37 form a helical membrane-spanning segment; sequence LGVVDLSLLGVGAVIAFAWLF. N-linked (GlcNAc...) asparagine glycans are attached at residues Asn-77, Asn-274, and Asn-297. Cys-453 is a binding site for heme.

Belongs to the cytochrome P450 family. The cofactor is heme.

It localises to the membrane. It catalyses the reaction cyathadiol + reduced [NADPH--hemoprotein reductase] + O2 = cyathatriol + oxidized [NADPH--hemoprotein reductase] + H2O + H(+). The protein operates within secondary metabolite biosynthesis. Its function is as follows. Cytochrome P450 monooxygenase; part of the gene cluster that mediates the biosynthesis of erinacines, cyathane-xylosides that show unique biological activities, including leishmanicidal activity, stimulating activity for nerve growth-factor synthesis, and agonistic activity toward the kappa opioid receptor. Within the pathway, eriA catalyzes C-11 hydroxylation in the presence of the short chain dehydrogenase/reductase (SDR) eriH, which leads to the production of cyathatriol. The first step of the erinacines biosynthesis pathway is catalyzed by the geranylgeranyl diphosphate (GGPP) synthase eriE via conversion of farnesyl pyrophosphate and isopentyl pyrophosphate into geranylgeranyl pyrophosphate (GGPP). GGPP is then substrate of the diterpene cyclase eriG for the production of cyatha-3,12-diene. The cytochrome P450 monooxygenase eriI then hydroxylates cyatha-3,12-diene at C-14 of the seven-membered ring to produce erinacol, which is further hydroxylated at C-15 by the cytochrome P450 monooxygenase eriC to yield cyathadiol. The cytochrome P450 monooxygenase eriA then catalyzes C-11 hydroxylation in the presence of the short chain dehydrogenase/reductase (SDR) eriH, which leads to the production of cyathatriol. The acetyltransferase eriL converts cyathatriol into 11-O-acetyl-cyathatriol. The SDR eriH catalyzes further oxidation of 11-O-acetyl-cyathatriol into 1-O-acetylcyathin A3. Finally, the glycosyl transferase eriJ tranfers xylose from UDP-xylose onto C-14 of 11-O-acetyl-cyathatriol to form eracine Q. EriJ is also able to convert 11-O-acetyl-cyathatriol to eracine Q2 by using UDP-D-glucose as cosubstrate, but at a lower rate. The protein is Cytochrome P450 monooxyhenase eriA of Hericium erinaceus (Lion's mane mushroom).